Here is a 371-residue protein sequence, read N- to C-terminus: Nuclear hormone receptor family member nhr-51 (371 aa).

The nuclear receptor DNA-binding region spans 2–77 (NKNCLICHRK…MGMQAFPRRV (76 aa)). 2 consecutive NR C4-type zinc fingers follow at residues 5–25 (CLICHRKAAGQHYGVLSCFAC) and 41–60 (CQKFNKCYEKFIILPKCKAC). The region spanning 98-337 (MDEQRHWRML…KQLVTDTFVD (240 aa)) is the NR LBD domain.

Belongs to the nuclear hormone receptor family.

Its subcellular location is the nucleus. Orphan nuclear receptor. The polypeptide is Nuclear hormone receptor family member nhr-51 (nhr-51) (Caenorhabditis elegans).